The primary structure comprises 213 residues: Uridine kinase (213 aa).

14–21 (GASASGKS) provides a ligand contact to ATP.

It belongs to the uridine kinase family.

The protein resides in the cytoplasm. The catalysed reaction is uridine + ATP = UMP + ADP + H(+). The enzyme catalyses cytidine + ATP = CMP + ADP + H(+). It participates in pyrimidine metabolism; CTP biosynthesis via salvage pathway; CTP from cytidine: step 1/3. It functions in the pathway pyrimidine metabolism; UMP biosynthesis via salvage pathway; UMP from uridine: step 1/1. The chain is Uridine kinase from Vibrio atlanticus (strain LGP32) (Vibrio splendidus (strain Mel32)).